A 272-amino-acid polypeptide reads, in one-letter code: MADAETRLYGVIGFPARHSLSPVMHNAAFRALGINAVYLAFEVPPEELGEAIGGAKALGISGLNVTMPHKEAVIHFLDSLSEDSGEIGSVNTVVNRKGRLEGHTTDGLGARRALERAIELGGRRILIIGAGGAGKAIAYELSRDNEVVVLNRTPEKAKALERFGITGDALNRENLGEYLEWAEVLINATSVGMNSWETPVPAELLRRDLVVMDIVYKPLKTRLLTEAELRGCKTVDGLWMLVYQGIESFRLWTGFKPDEGLMRGAALEGISE.

Shikimate contacts are provided by residues 19–21 (SLS) and Thr66. The Proton acceptor role is filled by Lys70. Glu82 serves as a coordination point for NADP(+). The shikimate site is built by Asn91 and Asp106. NADP(+) contacts are provided by residues 129 to 133 (GAGGA), 151 to 156 (NRTPEK), and Ile214. Tyr216 provides a ligand contact to shikimate. Gly237 serves as a coordination point for NADP(+).

This sequence belongs to the shikimate dehydrogenase family. As to quaternary structure, homodimer.

The enzyme catalyses shikimate + NADP(+) = 3-dehydroshikimate + NADPH + H(+). It participates in metabolic intermediate biosynthesis; chorismate biosynthesis; chorismate from D-erythrose 4-phosphate and phosphoenolpyruvate: step 4/7. In terms of biological role, involved in the biosynthesis of the chorismate, which leads to the biosynthesis of aromatic amino acids. Catalyzes the reversible NADPH linked reduction of 3-dehydroshikimate (DHSA) to yield shikimate (SA). This Thermococcus kodakarensis (strain ATCC BAA-918 / JCM 12380 / KOD1) (Pyrococcus kodakaraensis (strain KOD1)) protein is Shikimate dehydrogenase (NADP(+)).